Consider the following 180-residue polypeptide: UPF0227 protein VV2369 (180 aa).

Belongs to the UPF0227 family.

This is UPF0227 protein VV2369 from Vibrio vulnificus (strain YJ016).